A 638-amino-acid polypeptide reads, in one-letter code: CTTNBP2 N-terminal-like protein (638 aa).

Positions 87 to 284 (MKQCKNMQER…KDLEAAQQHR (198 aa)) form a coiled coil. 4 disordered regions span residues 280 to 303 (AQQH…TATE), 360 to 430 (RELT…PCSS), 463 to 490 (RHKF…LSPT), and 514 to 621 (NQGP…CSPS). A Phosphoserine modification is found at S285. Residues 360 to 371 (RELTSDSSTENQ) show a composition bias toward polar residues. Low complexity-rich tracts occupy residues 401 to 430 (TMPS…PCSS) and 467 to 477 (QSQADQDQQAS). Phosphoserine is present on residues S481, S488, S522, S526, S559, S562, and S567. A compositionally biased stretch (polar residues) spans 514–528 (NQGPIKPVSPNSSPF). Residues T569 and T589 each carry the phosphothreonine modification. Residues 589–620 (TPSQSATTPVTKTHSQASSLAATEDLASSCSP) show a composition bias toward polar residues. S591 is subject to Phosphoserine.

In terms of assembly, interacts with CTTN/cortactin; this interaction may redistribute CTTN to stress fibers. May form homomers. Associates with the core of STRIPAK complexes composed of PP2A catalytic and scaffolding subunits, the striatins (PP2A regulatory subunits), the striatin-associated proteins MOB4, STRIP1 and STRIP2, PDCD10 and members of the STE20 kinases, such as STK24 and STK26. In terms of tissue distribution, predominantly expressed in skin, also detectable in spleen and lung (at protein level). Very low levels, if any, in brain (at protein level).

The protein resides in the cell projection. It localises to the lamellipodium. The protein localises to the cytoplasm. Its subcellular location is the cytoskeleton. It is found in the stress fiber. Its function is as follows. Regulates lamellipodial actin dynamics in a CTTN-dependent manner. Associates with core striatin-interacting phosphatase and kinase (STRIPAK) complex to form CTTNBP2NL-STRIPAK complexes. STRIPAK complexes have critical roles in protein (de)phosphorylation and are regulators of multiple signaling pathways including Hippo, MAPK, nuclear receptor and cytoskeleton remodeling. Different types of STRIPAK complexes are involved in a variety of biological processes such as cell growth, differentiation, apoptosis, metabolism and immune regulation. This Mus musculus (Mouse) protein is CTTNBP2 N-terminal-like protein (Cttnbp2nl).